The primary structure comprises 667 residues: MAAAAPSPSSSAFSKTLSPSSSTSSTLLPRSTFPFPHHPHKTTPPPLHLTHTHIHIHSQRRRFTISNVISTNQKVSQTEKTETFVSRFAPDEPRKGSDVLVEALEREGVTDVFAYPGGASMEIHQALTRSSIIRNVLPRHEQGGVFAAEGYARATGFPGVCIATSGPGATNLVSGLADALLDSVPIVAITGQVPRRMIGTDAFQETPIVEVTRSITKHNYLVMDVEDIPRVVREAFFLARSGRPGPILIDVPKDIQQQLVIPDWDQPMRLPGYMSRLPKLPNEMLLEQIVRLISESKKPVLYVGGGCSQSSEDLRRFVELTGIPVASTLMGLGAFPTGDELSLSMLGMHGTVYANYAVDSSDLLLAFGVRFDDRVTGKLEAFASRAKIVHIDIDSAEIGKNKQPHVSICADIKLALQGLNSILESKEGKLKLDFSAWRQELTEQKVKHPLNFKTFGDAIPPQYAIQVLDELTNGNAIISTGVGQHQMWAAQYYKYRKPRQWLTSGGLGAMGFGLPAAIGAAVGRPDEVVVDIDGDGSFIMNVQELATIKVENLPVKIMLLNNQHLGMVVQWEDRFYKANRAHTYLGNPSNEAEIFPNMLKFAEACGVPAARVTHRDDLRAAIQKMLDTPGPYLLDVIVPHQEHVLPMIPSGGAFKDVITEGDGRSSY.

Over residues 1–35 (MAAAAPSPSSSAFSKTLSPSSSTSSTLLPRSTFPF) the composition is skewed to low complexity. The tract at residues 1–45 (MAAAAPSPSSSAFSKTLSPSSSTSSTLLPRSTFPFPHHPHKTTPP) is disordered. The transit peptide at 1–94 (MAAAAPSPSS…VSRFAPDEPR (94 aa)) directs the protein to the chloroplast. E141 is a binding site for thiamine diphosphate. The cysteines at positions 161 and 307 are disulfide-linked. Residues R243, 349 to 370 (HGTV…FGVR), and 392 to 411 (DIDS…ICAD) each bind FAD. The segment at 484–564 (QHQMWAAQYY…VKIMLLNNQH (81 aa)) is thiamine pyrophosphate binding. The Mg(2+) site is built by D535 and N562.

The protein belongs to the TPP enzyme family. Mg(2+) serves as cofactor. The cofactor is thiamine diphosphate.

Its subcellular location is the plastid. The protein localises to the chloroplast. The enzyme catalyses 2 pyruvate + H(+) = (2S)-2-acetolactate + CO2. The protein operates within amino-acid biosynthesis; L-isoleucine biosynthesis; L-isoleucine from 2-oxobutanoate: step 1/4. Its pathway is amino-acid biosynthesis; L-valine biosynthesis; L-valine from pyruvate: step 1/4. The chain is Acetolactate synthase 1, chloroplastic (ALS SURA) from Nicotiana tabacum (Common tobacco).